Here is a 62-residue protein sequence, read N- to C-terminus: Small ribosomal subunit protein eS30z/eS30y/eS30x (62 aa).

The disordered stretch occupies residues 1–38 (MGKVHGSLARAGKVRGQTPKVAKQDKKKKPRGRAHKRL). A compositionally biased stretch (basic residues) spans 25-38 (DKKKKPRGRAHKRL).

Belongs to the eukaryotic ribosomal protein eS30 family.

In Arabidopsis thaliana (Mouse-ear cress), this protein is Small ribosomal subunit protein eS30z/eS30y/eS30x (RPS30A).